A 175-amino-acid polypeptide reads, in one-letter code: MAIILGVDPGSRITGYGLIRSEGRLLEYLDSGCIRVGEKPMAERLQTIFHSLAVLIGEYRPEEFAIEQVFMARNPDSALKLGQARGAAIVSAANSGLAVHEYSARQVKQAVVGTGGADKSQVQHMVQALLGLSRKPQADAADALAIALCHAHMNQSVLRMARTGGKVRSGRVRQP.

Active-site residues include D8, E67, and D139. Residues D8, E67, and D139 each coordinate Mg(2+).

It belongs to the RuvC family. In terms of assembly, homodimer which binds Holliday junction (HJ) DNA. The HJ becomes 2-fold symmetrical on binding to RuvC with unstacked arms; it has a different conformation from HJ DNA in complex with RuvA. In the full resolvosome a probable DNA-RuvA(4)-RuvB(12)-RuvC(2) complex forms which resolves the HJ. It depends on Mg(2+) as a cofactor.

It is found in the cytoplasm. The enzyme catalyses Endonucleolytic cleavage at a junction such as a reciprocal single-stranded crossover between two homologous DNA duplexes (Holliday junction).. The RuvA-RuvB-RuvC complex processes Holliday junction (HJ) DNA during genetic recombination and DNA repair. Endonuclease that resolves HJ intermediates. Cleaves cruciform DNA by making single-stranded nicks across the HJ at symmetrical positions within the homologous arms, yielding a 5'-phosphate and a 3'-hydroxyl group; requires a central core of homology in the junction. The consensus cleavage sequence is 5'-(A/T)TT(C/G)-3'. Cleavage occurs on the 3'-side of the TT dinucleotide at the point of strand exchange. HJ branch migration catalyzed by RuvA-RuvB allows RuvC to scan DNA until it finds its consensus sequence, where it cleaves and resolves the cruciform DNA. This chain is Crossover junction endodeoxyribonuclease RuvC, found in Marinobacter nauticus (strain ATCC 700491 / DSM 11845 / VT8) (Marinobacter aquaeolei).